Reading from the N-terminus, the 792-residue chain is Ubiquitin carboxyl-terminal hydrolase 10 (792 aa).

Positions 2-27 (TTQESIKPLVDRILSNPLQFNAAMIS) are DHR2-binding module. Disordered regions lie at residues 64–87 (AESK…NTVP) and 103–320 (KDAA…SITP). Residues 107–129 (DATGAKKSAELSTELSTEPPSSS) are compositionally biased toward low complexity. The SIR4-binding module stretch occupies residues 109–145 (TGAKKSAELSTELSTEPPSSSSEDDKVGKEEEEEGEI). Positions 144–171 (EIFHEARDYVEPRKASLKERDNADKGDG) are enriched in basic and acidic residues. Residues 167–208 (DKGDGEDIGEDIGEDIGEDIGEDIGEDIGENLGSPLATIDDS) form a UTP22-binding module region. A compositionally biased stretch (acidic residues) spans 172–195 (EDIGEDIGEDIGEDIGEDIGEDIG). Positions 211 to 220 (ENEKEKRKEL) are enriched in basic and acidic residues. Residues 226–241 (SDDEIEDDEDEDDMDY) show a composition bias toward acidic residues. The segment covering 288–297 (VNNTKENGNR) has biased composition (polar residues). Residues 362 to 733 (RGLLNHGVTC…NAYYLLYTRL (372 aa)) enclose the USP domain. C371 serves as the catalytic Nucleophile. Residues 526 to 563 (LDPNSDLSSDSINGTSATTSTTTSNAATKPSLSSSSSV) form a disordered region. Over residues 530 to 539 (SDLSSDSING) the composition is skewed to polar residues. Residues 540–563 (TSATTSTTTSNAATKPSLSSSSSV) are compositionally biased toward low complexity. The active-site Proton acceptor is H691. A compositionally biased stretch (polar residues) spans 749–766 (TGNVTSKSKQEQAVNEPN). Positions 749–792 (TGNVTSKSKQEQAVNEPNNRPLKINSKKNNRKKWKKNKKRKFTK) are disordered. The segment covering 773-792 (NSKKNNRKKWKKNKKRKFTK) has biased composition (basic residues).

It belongs to the peptidase C19 family. Interacts with SIR4. Interacts with the proliferating-cell nuclear antigen PCNA/POL30. Interacts with DHR2 and UTP22.

The protein resides in the nucleus. The protein localises to the chromosome. It localises to the telomere. Its subcellular location is the nucleolus. The catalysed reaction is Thiol-dependent hydrolysis of ester, thioester, amide, peptide and isopeptide bonds formed by the C-terminal Gly of ubiquitin (a 76-residue protein attached to proteins as an intracellular targeting signal).. Deubiquitinating enzyme involved in telomere and HM loci silencing, which is the repression of chromatin structure which leads to a stop in the transcription of nearby genes. Targets histone H2B for deubiquitination, thus helping to localize SIR2 to the telomere. At silent chromatin, including telomeres and the rDNA locus, not only maintains low H2B 'Lys-123' ubiquitination (H2BK123Ub), but also low H3 'Lys-4' and 'Lys-79' methylation (H3K4me and H3K79me, respectively). Controls the proliferating-cell nuclear antigen PCNA/POL30 deubiquitination which is crucial for keeping TLS polymerases in check as well as for down-regulating the error-free bypass. Deubiquitinates and stabilizes RPA190, the largest subunit of RNA polymerase I, to achieve optimal levels of ribosomes and cell growth. Also protects nutrient transporters such as GAP1 from ubiquitin-dependent endocytosis. In Saccharomyces cerevisiae (strain ATCC 204508 / S288c) (Baker's yeast), this protein is Ubiquitin carboxyl-terminal hydrolase 10 (UBP10).